The sequence spans 579 residues: Type II methyltransferase M.BseCI (579 aa).

This sequence belongs to the N(4)/N(6)-methyltransferase family.

It carries out the reaction a 2'-deoxyadenosine in DNA + S-adenosyl-L-methionine = an N(6)-methyl-2'-deoxyadenosine in DNA + S-adenosyl-L-homocysteine + H(+). In terms of biological role, a gamma subtype methylase, recognizes the double-stranded sequence 5'-ATCGAT-3', methylation on A-5 on both strands, and protects the DNA from cleavage by the BanIII endonuclease. The chain is Type II methyltransferase M.BseCI from Geobacillus stearothermophilus (Bacillus stearothermophilus).